Here is a 149-residue protein sequence, read N- to C-terminus: Nucleoside diphosphate kinase (149 aa).

Lysine 9, phenylalanine 57, arginine 85, threonine 91, arginine 102, and asparagine 112 together coordinate ATP. Histidine 115 acts as the Pros-phosphohistidine intermediate in catalysis.

Belongs to the NDK family. As to quaternary structure, homotetramer. Mg(2+) is required as a cofactor.

The protein resides in the cytoplasm. The catalysed reaction is a 2'-deoxyribonucleoside 5'-diphosphate + ATP = a 2'-deoxyribonucleoside 5'-triphosphate + ADP. The enzyme catalyses a ribonucleoside 5'-diphosphate + ATP = a ribonucleoside 5'-triphosphate + ADP. Functionally, major role in the synthesis of nucleoside triphosphates other than ATP. The ATP gamma phosphate is transferred to the NDP beta phosphate via a ping-pong mechanism, using a phosphorylated active-site intermediate. This Heliobacterium modesticaldum (strain ATCC 51547 / Ice1) protein is Nucleoside diphosphate kinase.